Consider the following 306-residue polypeptide: Ribonuclease BN (306 aa).

Zn(2+) contacts are provided by H64, H66, D68, H69, H141, D212, and H270. D68 serves as the catalytic Proton acceptor.

This sequence belongs to the RNase Z family. RNase BN subfamily. Homodimer. The cofactor is Zn(2+).

Zinc phosphodiesterase, which has both exoribonuclease and endoribonuclease activities. The protein is Ribonuclease BN of Klebsiella pneumoniae (strain 342).